Reading from the N-terminus, the 1178-residue chain is DNA-directed RNA polymerase subunit beta' (1178 aa).

Zn(2+) is bound by residues cysteine 60, cysteine 62, cysteine 75, and cysteine 78. The Mg(2+) site is built by aspartate 450, aspartate 452, and aspartate 454. Zn(2+) contacts are provided by cysteine 795, cysteine 869, cysteine 876, and cysteine 879.

It belongs to the RNA polymerase beta' chain family. As to quaternary structure, the RNAP catalytic core consists of 2 alpha, 1 beta, 1 beta' and 1 omega subunit. When a sigma factor is associated with the core the holoenzyme is formed, which can initiate transcription. It depends on Mg(2+) as a cofactor. Zn(2+) is required as a cofactor.

It carries out the reaction RNA(n) + a ribonucleoside 5'-triphosphate = RNA(n+1) + diphosphate. In terms of biological role, DNA-dependent RNA polymerase catalyzes the transcription of DNA into RNA using the four ribonucleoside triphosphates as substrates. In Clostridium perfringens (strain ATCC 13124 / DSM 756 / JCM 1290 / NCIMB 6125 / NCTC 8237 / Type A), this protein is DNA-directed RNA polymerase subunit beta'.